Here is a 345-residue protein sequence, read N- to C-terminus: Holliday junction branch migration complex subunit RuvB (345 aa).

Residues Thr4 to Tyr194 form a large ATPase domain (RuvB-L) region. ATP-binding positions include Leu33, Arg34, Gly75, Lys78, Thr79, Thr80, Glu141–Tyr143, Arg184, Tyr194, and Arg231. Residue Thr79 participates in Mg(2+) binding. Positions Asn195–Asp265 are small ATPAse domain (RuvB-S). A head domain (RuvB-H) region spans residues Pro268–Ala345. Positions 323 and 328 each coordinate DNA.

It belongs to the RuvB family. Homohexamer. Forms an RuvA(8)-RuvB(12)-Holliday junction (HJ) complex. HJ DNA is sandwiched between 2 RuvA tetramers; dsDNA enters through RuvA and exits via RuvB. An RuvB hexamer assembles on each DNA strand where it exits the tetramer. Each RuvB hexamer is contacted by two RuvA subunits (via domain III) on 2 adjacent RuvB subunits; this complex drives branch migration. In the full resolvosome a probable DNA-RuvA(4)-RuvB(12)-RuvC(2) complex forms which resolves the HJ.

The protein resides in the cytoplasm. The enzyme catalyses ATP + H2O = ADP + phosphate + H(+). Its function is as follows. The RuvA-RuvB-RuvC complex processes Holliday junction (HJ) DNA during genetic recombination and DNA repair, while the RuvA-RuvB complex plays an important role in the rescue of blocked DNA replication forks via replication fork reversal (RFR). RuvA specifically binds to HJ cruciform DNA, conferring on it an open structure. The RuvB hexamer acts as an ATP-dependent pump, pulling dsDNA into and through the RuvAB complex. RuvB forms 2 homohexamers on either side of HJ DNA bound by 1 or 2 RuvA tetramers; 4 subunits per hexamer contact DNA at a time. Coordinated motions by a converter formed by DNA-disengaged RuvB subunits stimulates ATP hydrolysis and nucleotide exchange. Immobilization of the converter enables RuvB to convert the ATP-contained energy into a lever motion, pulling 2 nucleotides of DNA out of the RuvA tetramer per ATP hydrolyzed, thus driving DNA branch migration. The RuvB motors rotate together with the DNA substrate, which together with the progressing nucleotide cycle form the mechanistic basis for DNA recombination by continuous HJ branch migration. Branch migration allows RuvC to scan DNA until it finds its consensus sequence, where it cleaves and resolves cruciform DNA. In Chromobacterium violaceum (strain ATCC 12472 / DSM 30191 / JCM 1249 / CCUG 213 / NBRC 12614 / NCIMB 9131 / NCTC 9757 / MK), this protein is Holliday junction branch migration complex subunit RuvB.